Here is a 433-residue protein sequence, read N- to C-terminus: MARCTNLVTVFLLWALLMFSWCKASRISPNVYDHSYKRFKSDSLIKRREDITGLRSFVRASLRTPTTVSVSDFGAKGDGKTDDTQAFVNAWKKACSSNGAVNLLVPKGNTYLLKSIQLTGPCNSILTVQIFGTLSASQKRSDYKDISKWIMFDGVNNLSVDGGDTGVVDGNGETWWQNSCKRNKAKPCTKAPTALTFYNSKSLIVKNLKVRNAQQIQISIEKCSNVQVSNVVVTAPADSPNTDGIHITNTQNIRVSESIIGTGDDCISIESGSQNVQINDITCGPGHGISIGSLGDDNSKAFVSGVTVDGAKLSGTDNGVRIKTYQGGSGTASNIIFQNIQMDNVKNPIIIDQDYCDKSKCTTEKSAVQVKNVVYRDISGTSASENAITFNCSKNYPCQGIVLDRVNIKGGKATCTNANVVDKGAVLPQCNST.

An N-terminal signal peptide occupies residues 1–24 (MARCTNLVTVFLLWALLMFSWCKA). 5 PbH1 repeats span residues 223–249 (CSNV…HITN), 250–271 (TQNI…SIES), 273–293 (SQNV…SIGS), 303–324 (VSGV…RIKT), and 332–353 (ASNI…IIDQ). Residue Asp-264 is the Proton donor of the active site. His-287 is an active-site residue.

It belongs to the glycosyl hydrolase 28 family. Expressed in roots and in the abscission zone of the sepals, petals and stamens of flowers, at the base of cauline leaves and in the basal cell of trichomes from senescing leaves. Found at the site of lateral root emergence, in the dehiscence zone of anthers and maturing siliques. Also expressed early in anther development, at the time of microspore separation. Expressed in germinating seeds, at the point at which the radicle broke through the seed coat. Not expressed at the junction between the seed and the funiculus or in the dehiscence zone of anthers or pods.

It is found in the secreted. Its subcellular location is the cell wall. It carries out the reaction (1,4-alpha-D-galacturonosyl)n+m + H2O = (1,4-alpha-D-galacturonosyl)n + (1,4-alpha-D-galacturonosyl)m.. Functionally, polygalacturonase involved in cell separation in the final stages of pod shatter, in anther dehiscence and in floral organ abscission. This Arabidopsis thaliana (Mouse-ear cress) protein is Polygalacturonase ADPG2 (ADPG2).